We begin with the raw amino-acid sequence, 431 residues long: tRNA-2-methylthio-N(6)-dimethylallyladenosine synthase (431 aa).

One can recognise an MTTase N-terminal domain in the interval 4 to 120; sequence RAVYIKTFGC…IENIIENQVS (117 aa). Residues Cys-13, Cys-49, Cys-83, Cys-154, Cys-158, and Cys-161 each contribute to the [4Fe-4S] cluster site. Positions 140 to 367 constitute a Radical SAM core domain; that stretch reads RKDCVKAWVN…LKLQDEITER (228 aa). In terms of domain architecture, TRAM spans 370–430; sequence KRLEGKIQEV…RHSLEGDIIS (61 aa).

This sequence belongs to the methylthiotransferase family. MiaB subfamily. As to quaternary structure, monomer. Requires [4Fe-4S] cluster as cofactor.

Its subcellular location is the cytoplasm. It carries out the reaction N(6)-dimethylallyladenosine(37) in tRNA + (sulfur carrier)-SH + AH2 + 2 S-adenosyl-L-methionine = 2-methylsulfanyl-N(6)-dimethylallyladenosine(37) in tRNA + (sulfur carrier)-H + 5'-deoxyadenosine + L-methionine + A + S-adenosyl-L-homocysteine + 2 H(+). In terms of biological role, catalyzes the methylthiolation of N6-(dimethylallyl)adenosine (i(6)A), leading to the formation of 2-methylthio-N6-(dimethylallyl)adenosine (ms(2)i(6)A) at position 37 in tRNAs that read codons beginning with uridine. The sequence is that of tRNA-2-methylthio-N(6)-dimethylallyladenosine synthase from Thermodesulfovibrio yellowstonii (strain ATCC 51303 / DSM 11347 / YP87).